Here is a 428-residue protein sequence, read N- to C-terminus: tRNA modification GTPase MnmE (428 aa).

(6S)-5-formyl-5,6,7,8-tetrahydrofolate contacts are provided by Arg-20, Glu-77, and Lys-117. The TrmE-type G domain occupies 213-351 (GFEIALVGAP…LLEKIRSVFS (139 aa)). A K(+)-binding site is contributed by Asn-223. Residues 223-228 (NAGKST), 242-248 (SEIAGTT), and 267-270 (DTAG) contribute to the GTP site. Mg(2+) is bound at residue Ser-227. K(+) is bound by residues Ser-242, Ile-244, and Thr-247. Position 248 (Thr-248) interacts with Mg(2+). Lys-428 is a binding site for (6S)-5-formyl-5,6,7,8-tetrahydrofolate.

This sequence belongs to the TRAFAC class TrmE-Era-EngA-EngB-Septin-like GTPase superfamily. TrmE GTPase family. Homodimer. Heterotetramer of two MnmE and two MnmG subunits. Requires K(+) as cofactor.

The protein localises to the cytoplasm. In terms of biological role, exhibits a very high intrinsic GTPase hydrolysis rate. Involved in the addition of a carboxymethylaminomethyl (cmnm) group at the wobble position (U34) of certain tRNAs, forming tRNA-cmnm(5)s(2)U34. The sequence is that of tRNA modification GTPase MnmE from Roseobacter denitrificans (strain ATCC 33942 / OCh 114) (Erythrobacter sp. (strain OCh 114)).